Here is a 240-residue protein sequence, read N- to C-terminus: Probable transcriptional regulatory protein Hac_0344 (240 aa).

The protein belongs to the TACO1 family.

It is found in the cytoplasm. This chain is Probable transcriptional regulatory protein Hac_0344, found in Helicobacter acinonychis (strain Sheeba).